We begin with the raw amino-acid sequence, 653 residues long: Fructose-1,6-bisphosphatase class 3 (653 aa).

This sequence belongs to the FBPase class 3 family. The cofactor is Mn(2+).

It catalyses the reaction beta-D-fructose 1,6-bisphosphate + H2O = beta-D-fructose 6-phosphate + phosphate. The protein operates within carbohydrate biosynthesis; gluconeogenesis. The polypeptide is Fructose-1,6-bisphosphatase class 3 (Listeria monocytogenes serovar 1/2a (strain ATCC BAA-679 / EGD-e)).